Consider the following 323-residue polypeptide: Serine/threonine-protein phosphatase PP1-gamma catalytic subunit (323 aa).

Ala-2 bears the N-acetylalanine mark. Mn(2+) is bound by residues Asp-64, His-66, Asp-92, and Asn-124. His-125 (proton donor) is an active-site residue. Mn(2+)-binding residues include His-173 and His-248. Positions 302–323 are disordered; it reads KKPNATRPVTPPRGMITKQAKK. A phosphothreonine mark is found at Thr-307 and Thr-311.

This sequence belongs to the PPP phosphatase family. PP-1 subfamily. PP1 comprises a catalytic subunit, PPP1CA, PPP1CB or PPP1CC, which is folded into its native form by inhibitor 2 and glycogen synthetase kinase 3, and then complexed to one or several targeting or regulatory subunits. PPP1R12A, PPP1R12B and PPP1R12C mediate binding to myosin. PPP1R3A (in skeletal muscle), PPP1R3B (in liver), PPP1R3C, PPP1R3D and PPP1R3F (in brain) mediate binding to glycogen. Interacts with cyanobacterial toxin microcystin; disulfide-linked. Interacts with PPP1R3B and PPP1R7. Isoform 2 interacts with SPZ1. Interacts with CDCA2. PPP1R15A and PPP1R15B mediate binding to EIF2S1. Part of a complex containing PPP1R15B, PP1 and NCK1/2. Interacts with IKFZ1; the interaction targets PPP1CC to pericentromeric heterochromatin, dephosphorylates IKAROS, stabilizes it and prevents it from degradation. Interacts with PPP1R42; the interaction is direct. Interacts with NOM1 and PPP1R8. Component of the PTW/PP1 phosphatase complex, composed of PPP1R10/PNUTS, TOX4, WDR82, and PPP1CA or PPP1CB or PPP1CC. Interacts with PPP1R8. Interacts with isoform 1 and isoform 4 NEK2. Interacts with URI1; the interaction is phosphorylation-dependent and occurs in a growth factor-dependent manner. Interacts with FOXP3. Interacts with TMEM225 (via RVxF motif). Interacts with MKI67. Interacts with RRP1B; this targets PPP1CC to the nucleolus. Interacts with PPP1R2B. Found in a complex with PPP1CA, PPP1CC, SHC1 and PEAK1. Interacts with DYNLT4. Interacts (via RVxF motif) with FIRRM; regulates PLK1 kinase activity. Interacts with the KNL1 complex subunit KNL1; the interaction is direct and mutually exclusive with KNL1 binding to microtubules. Component of the SHOC2-MRAS-PP1c (SMP) complex consisting of SHOC2, GTP-bound M-Ras/MRAS and the catalytic subunit of protein phosphatase 1 (either PPP1CA, PPP1CB or PPP1CC). SHOC2 and PP1c preferably bind M-Ras/MRAS, but they also bind K-Ras/KRAS, N-Ras/NRAS and H-Ras/HRAS; these interactions are GTP-dependent and both SHOC2 and PP1c are required to form a stable complex. Interacts with SHOC2 in the absence of Ras GTPases. Mn(2+) is required as a cofactor. Post-translationally, phosphorylated by NEK2.

Its subcellular location is the cytoplasm. It localises to the nucleus. The protein localises to the nucleolus. It is found in the nucleoplasm. The protein resides in the nucleus speckle. Its subcellular location is the chromosome. It localises to the centromere. The protein localises to the kinetochore. It is found in the cleavage furrow. The protein resides in the midbody. Its subcellular location is the mitochondrion. It localises to the cytoskeleton. The protein localises to the microtubule organizing center. The enzyme catalyses O-phospho-L-seryl-[protein] + H2O = L-seryl-[protein] + phosphate. The catalysed reaction is O-phospho-L-threonyl-[protein] + H2O = L-threonyl-[protein] + phosphate. Inactivated by binding to URI1. The phosphatase activity of the PPP1R15A-PP1 complex toward EIF2S1 is specifically inhibited by Salubrinal, a drug that protects cells from endoplasmic reticulum stress. In terms of biological role, protein phosphatase that associates with over 200 regulatory proteins to form highly specific holoenzymes which dephosphorylate hundreds of biological targets. Protein phosphatase 1 (PP1) is essential for cell division, and participates in the regulation of glycogen metabolism, muscle contractility and protein synthesis. Dephosphorylates RPS6KB1. Involved in regulation of ionic conductances and long-term synaptic plasticity. May play an important role in dephosphorylating substrates such as the postsynaptic density-associated Ca(2+)/calmodulin dependent protein kinase II. Component of the PTW/PP1 phosphatase complex, which plays a role in the control of chromatin structure and cell cycle progression during the transition from mitosis into interphase. In balance with CSNK1D and CSNK1E, determines the circadian period length, through the regulation of the speed and rhythmicity of PER1 and PER2 phosphorylation. May dephosphorylate CSNK1D and CSNK1E. Regulates the recruitment of the SKA complex to kinetochores. Dephosphorylates the 'Ser-418' residue of FOXP3 in regulatory T-cells (Treg) from patients with rheumatoid arthritis, thereby inactivating FOXP3 and rendering Treg cells functionally defective. Together with PPP1CA (PP1-alpha subunit), dephosphorylates IFIH1/MDA5 and RIG-I leading to their activation and a functional innate immune response. Core component of the SHOC2-MRAS-PP1c (SMP) holophosphatase complex that regulates the MAPK pathway activation. The SMP complex specifically dephosphorylates the inhibitory phosphorylation at 'Ser-259' of RAF1 kinase, 'Ser-365' of BRAF kinase and 'Ser-214' of ARAF kinase, stimulating their kinase activities. Dephosphorylates MKI67 at the onset of anaphase. The SMP complex enhances the dephosphorylation activity and substrate specificity of PP1c. The sequence is that of Serine/threonine-protein phosphatase PP1-gamma catalytic subunit (PPP1CC) from Homo sapiens (Human).